The following is a 403-amino-acid chain: Na(+)/H(+) antiporter NhaH (403 aa).

Over 1 to 6 the chain is Cytoplasmic; the sequence is MHGFHD. A helical membrane pass occupies residues 7-27; it reads VFIQILLLLAISVSVIAIAKL. At 28–30 the chain is on the extracellular side; it reads LKE. The chain crosses the membrane as a helical span at residues 31–51; that stretch reads PDSIALVLVGLVLGLTELPII. Residues 52-65 are Cytoplasmic-facing; the sequence is EDAERYITQSEVFQ. Residues 66–86 traverse the membrane as a helical segment; the sequence is ATIISLFLPILLGDATLKLPF. Topologically, residues 87–98 are extracellular; it reads HHLFSQKKTVLG. Residues 99-119 traverse the membrane as a helical segment; sequence LAFVGTFVSSICIGTAAYFLL. Residues 120–124 lie on the Cytoplasmic side of the membrane; sequence DLPLA. Residues 125 to 145 traverse the membrane as a helical segment; that stretch reads VAFTFAALMSATDPISVLSIF. Topologically, residues 146 to 167 are extracellular; the sequence is KSLGVPQKMSTVMEGESLFNDG. Residues 168–188 form a helical membrane-spanning segment; the sequence is IAVVLFKIASIYLLTYMEMGW. The Cytoplasmic segment spans residues 189 to 195; that stretch reads AGLGSGV. The helical transmembrane segment at 196-216 threads the bilayer; it reads FLFLKFAIGGALVGLVLGYFF. Residues 217–218 are Extracellular-facing; sequence SQ. The chain crosses the membrane as a helical span at residues 219–239; sequence VIRVFDDYPLEVAFSALLFFG. At 240–241 the chain is on the cytoplasmic side; it reads SY. Residues 242–262 form a helical membrane-spanning segment; sequence FIAEHFHTSGVIAVVVGGFVF. The Extracellular segment spans residues 263–281; it reads GDYGAKIGMSKETKTNINT. Residues 282–302 form a helical membrane-spanning segment; that stretch reads FWDSVTLIANALIFLMVGLEI. Over 303–310 the chain is Cytoplasmic; sequence RNIDLAGN. The helical transmembrane segment at 311-331 threads the bilayer; the sequence is WGVIVGAILIVLVGRTIAVYL. The Extracellular portion of the chain corresponds to 332-372; that stretch reads GTGWVQELSSKERLLINWGGLRGSLSVALALSLPMDFAGRD. A helical transmembrane segment spans residues 373–393; it reads QVLLLTFSVVLFSLIVQGLTL. Residues 394–403 lie on the Cytoplasmic side of the membrane; the sequence is KPLIKKLGMI.

This sequence belongs to the monovalent cation:proton antiporter 1 (CPA1) transporter (TC 2.A.36) family.

Its subcellular location is the cell membrane. Functionally, na(+)/H(+) antiporter that extrudes sodium in exchange for external protons. Can also transport lithium. The protein is Na(+)/H(+) antiporter NhaH (nhaH) of Halobacillus dabanensis.